A 135-amino-acid polypeptide reads, in one-letter code: Small ribosomal subunit protein uS9 (135 aa).

Residues Pro102–Ala115 show a composition bias toward basic and acidic residues. The tract at residues Pro102–Arg135 is disordered. A compositionally biased stretch (basic residues) spans Lys116–Arg135.

Belongs to the universal ribosomal protein uS9 family.

The protein is Small ribosomal subunit protein uS9 of Synechococcus sp. (strain CC9311).